The sequence spans 186 residues: Ribosome-recycling factor (186 aa).

Belongs to the RRF family.

Its subcellular location is the cytoplasm. Its function is as follows. Responsible for the release of ribosomes from messenger RNA at the termination of protein biosynthesis. May increase the efficiency of translation by recycling ribosomes from one round of translation to another. The polypeptide is Ribosome-recycling factor (Bartonella quintana (strain Toulouse) (Rochalimaea quintana)).